The sequence spans 296 residues: Light-independent protochlorophyllide reductase iron-sulfur ATP-binding protein (296 aa).

ATP contacts are provided by residues 39-44 and lysine 68; that span reads GIGKST. Serine 43 lines the Mg(2+) pocket. Cysteine 124 and cysteine 158 together coordinate [4Fe-4S] cluster. ATP is bound at residue 209-210; the sequence is NR.

The protein belongs to the NifH/BchL/ChlL family. In terms of assembly, homodimer. Protochlorophyllide reductase is composed of three subunits; ChlL, ChlN and ChlB. Requires [4Fe-4S] cluster as cofactor.

The enzyme catalyses chlorophyllide a + oxidized 2[4Fe-4S]-[ferredoxin] + 2 ADP + 2 phosphate = protochlorophyllide a + reduced 2[4Fe-4S]-[ferredoxin] + 2 ATP + 2 H2O. It functions in the pathway porphyrin-containing compound metabolism; chlorophyll biosynthesis (light-independent). Component of the dark-operative protochlorophyllide reductase (DPOR) that uses Mg-ATP and reduced ferredoxin to reduce ring D of protochlorophyllide (Pchlide) to form chlorophyllide a (Chlide). This reaction is light-independent. The L component serves as a unique electron donor to the NB-component of the complex, and binds Mg-ATP. The protein is Light-independent protochlorophyllide reductase iron-sulfur ATP-binding protein of Synechococcus sp. (strain WH7803).